Consider the following 239-residue polypeptide: Small ribosomal subunit protein uS2 (239 aa).

Belongs to the universal ribosomal protein uS2 family.

The sequence is that of Small ribosomal subunit protein uS2 from Histophilus somni (strain 129Pt) (Haemophilus somnus).